Here is an 84-residue protein sequence, read N- to C-terminus: U8-theraphotoxin-Hhn1f (84 aa).

The N-terminal stretch at 1–21 (MKVVLLVCLVWMMAMMELVSC) is a signal peptide. 5 disulfides stabilise this stretch: cysteine 23–cysteine 35, cysteine 29–cysteine 44, cysteine 34–cysteine 67, cysteine 54–cysteine 75, and cysteine 69–cysteine 81.

Belongs to the AVIT (prokineticin) family. Expressed by the venom gland.

The protein resides in the secreted. The chain is U8-theraphotoxin-Hhn1f from Cyriopagopus hainanus (Chinese bird spider).